A 541-amino-acid chain; its full sequence is Arginine--tRNA ligase (541 aa).

Positions 119–129 match the 'HIGH' region motif; it reads ANPTGPLHIGH.

Belongs to the class-I aminoacyl-tRNA synthetase family. As to quaternary structure, monomer.

It is found in the cytoplasm. The catalysed reaction is tRNA(Arg) + L-arginine + ATP = L-arginyl-tRNA(Arg) + AMP + diphosphate. In Helicobacter pylori (strain P12), this protein is Arginine--tRNA ligase.